Reading from the N-terminus, the 283-residue chain is Acetylglutamate kinase (283 aa).

Substrate contacts are provided by residues 64–65 (GG), Arg86, and Asn178.

Belongs to the acetylglutamate kinase family. ArgB subfamily.

It localises to the cytoplasm. The enzyme catalyses N-acetyl-L-glutamate + ATP = N-acetyl-L-glutamyl 5-phosphate + ADP. The protein operates within amino-acid biosynthesis; L-arginine biosynthesis; N(2)-acetyl-L-ornithine from L-glutamate: step 2/4. Catalyzes the ATP-dependent phosphorylation of N-acetyl-L-glutamate. This chain is Acetylglutamate kinase, found in Lactococcus lactis subsp. cremoris (strain SK11).